We begin with the raw amino-acid sequence, 390 residues long: Ketoisovalerate reductase BEA2 (390 aa).

Residue 70-75 (GPGNIG) participates in NADP(+) binding. Residue Lys285 is the Proton donor of the active site. Substrate is bound by residues Asn289 and Asn293.

The protein belongs to the ketopantoate reductase family.

It catalyses the reaction (R)-2-hydroxy-3-methylbutanoate + NADP(+) = 3-methyl-2-oxobutanoate + NADPH + H(+). With respect to regulation, the reductase activity is increased by Mg(2+) (195%), Ca(2+) (169%) and slightly increased by K(+) (123%). The reduction activity is inhibited by Fe(2+) and Co(2+), and almost totally inhibited by Cu(2+), Mn(2+), Zn(2+) and Fe(3+) (from 3% to 9% residual activity respectively). The chelating agent EDTA had little effect, suggesting Mg(2+) and Ca(2+) are not determining factors, though they could promote the reductase enzyme activity. Functionally, ketoisovalerate reductase; part of the gene cluster that mediates the biosynthesis of beauvericin (BEA), a non-ribosomal cyclic hexadepsipeptide that shows antibiotic, antifungal, insecticidal, and cancer cell antiproliferative and antihaptotactic activity. Ketoisovalerate reductase BEA2 catalyzes the NADPH-specific reduction of ketoisovaleric acid to hydroxyisovalerate, a precursor for beauvericin biosynthesis. The nonribosomal cyclodepsipeptide synthetase BEA1 then catalyzes the formation of beauvericin via condensation and cyclization of 3 dipeptidol monomers, each composed of one unit of hydroxyisovalerate and one unit of N-methyl-phenylalanine. The protein is Ketoisovalerate reductase BEA2 of Gibberella intermedia (Bulb rot disease fungus).